Reading from the N-terminus, the 182-residue chain is Adenine phosphoribosyltransferase (182 aa).

Belongs to the purine/pyrimidine phosphoribosyltransferase family. Homodimer.

The protein resides in the cytoplasm. It catalyses the reaction AMP + diphosphate = 5-phospho-alpha-D-ribose 1-diphosphate + adenine. Its pathway is purine metabolism; AMP biosynthesis via salvage pathway; AMP from adenine: step 1/1. In terms of biological role, catalyzes a salvage reaction resulting in the formation of AMP, that is energically less costly than de novo synthesis. This chain is Adenine phosphoribosyltransferase, found in Campylobacter jejuni subsp. jejuni serotype O:2 (strain ATCC 700819 / NCTC 11168).